Consider the following 226-residue polypeptide: Type-5 uracil-DNA glycosylase (226 aa).

Residues cysteine 23, cysteine 26, cysteine 125, and cysteine 140 each coordinate [4Fe-4S] cluster.

This sequence belongs to the uracil-DNA glycosylase (UDG) superfamily. Type 5 (UDGb) family.

In terms of biological role, DNA glycosylase with broad substrate specificity. Can remove uracil from double-stranded DNA containing either a U/G or U/A base pair. Can also process hydroxymethyluracil (mispaired with guanine or adenine), hypoxanthine and fluorouracil. Exhibits a clear preference for double-stranded DNA substrates, but can also process uracil in single-stranded DNA, with lower efficiency. This is Type-5 uracil-DNA glycosylase from Pyrobaculum aerophilum (strain ATCC 51768 / DSM 7523 / JCM 9630 / CIP 104966 / NBRC 100827 / IM2).